The sequence spans 818 residues: Glycerol-3-phosphate acyltransferase (818 aa).

Residues 305-310 (HRSHMD) carry the HXXXXD motif motif.

Belongs to the GPAT/DAPAT family.

Its subcellular location is the cell inner membrane. It catalyses the reaction sn-glycerol 3-phosphate + an acyl-CoA = a 1-acyl-sn-glycero-3-phosphate + CoA. Its pathway is phospholipid metabolism; CDP-diacylglycerol biosynthesis; CDP-diacylglycerol from sn-glycerol 3-phosphate: step 1/3. This chain is Glycerol-3-phosphate acyltransferase, found in Photorhabdus laumondii subsp. laumondii (strain DSM 15139 / CIP 105565 / TT01) (Photorhabdus luminescens subsp. laumondii).